The following is a 566-amino-acid chain: Serine/threonine-protein kinase ppk14 (566 aa).

A compositionally biased stretch (basic and acidic residues) spans 1-31; that stretch reads MNELHDGESSEEGRINVEDHLEEAKKDDTGH. Disordered regions lie at residues 1 to 39 and 60 to 152; these read MNEL…GTAK and SRKK…EKLK. The segment covering 74-85 has biased composition (polar residues); sequence AANQSPSGAPES. Residues 119–129 are compositionally biased toward basic residues; that stretch reads SFFKSGRKKKD. The span at 134 to 145 shows a compositional bias: polar residues; sequence RNVSRSNGADTS. Residues 195 to 485 form the Protein kinase domain; sequence FEKVFLLGKG…AADVKLHPFF (291 aa). Residues 201-209 and Lys224 contribute to the ATP site; that span reads LGKGDVGRV. Asp320 (proton acceptor) is an active-site residue. Thr379 carries the phosphothreonine modification. Ser381 carries the phosphoserine modification. Thr385 bears the Phosphothreonine mark.

This sequence belongs to the protein kinase superfamily. Ser/Thr protein kinase family. KIN82 subfamily.

It carries out the reaction L-seryl-[protein] + ATP = O-phospho-L-seryl-[protein] + ADP + H(+). The catalysed reaction is L-threonyl-[protein] + ATP = O-phospho-L-threonyl-[protein] + ADP + H(+). The polypeptide is Serine/threonine-protein kinase ppk14 (ppk14) (Schizosaccharomyces pombe (strain 972 / ATCC 24843) (Fission yeast)).